Consider the following 373-residue polypeptide: Transaldolase (373 aa).

Residue lysine 143 is the Schiff-base intermediate with substrate of the active site.

The protein belongs to the transaldolase family. Type 2 subfamily.

The protein resides in the cytoplasm. It catalyses the reaction D-sedoheptulose 7-phosphate + D-glyceraldehyde 3-phosphate = D-erythrose 4-phosphate + beta-D-fructose 6-phosphate. Its pathway is carbohydrate degradation; pentose phosphate pathway; D-glyceraldehyde 3-phosphate and beta-D-fructose 6-phosphate from D-ribose 5-phosphate and D-xylulose 5-phosphate (non-oxidative stage): step 2/3. Its function is as follows. Transaldolase is important for the balance of metabolites in the pentose-phosphate pathway. The protein is Transaldolase of Mycolicibacterium paratuberculosis (strain ATCC BAA-968 / K-10) (Mycobacterium paratuberculosis).